A 283-amino-acid polypeptide reads, in one-letter code: 4-diphosphocytidyl-2-C-methyl-D-erythritol kinase (283 aa).

Lys10 is an active-site residue. 99 to 109 serves as a coordination point for ATP; that stretch reads PMGGGLGGGSS. Residue Asp141 is part of the active site.

The protein belongs to the GHMP kinase family. IspE subfamily. Homodimer.

The catalysed reaction is 4-CDP-2-C-methyl-D-erythritol + ATP = 4-CDP-2-C-methyl-D-erythritol 2-phosphate + ADP + H(+). It participates in isoprenoid biosynthesis; isopentenyl diphosphate biosynthesis via DXP pathway; isopentenyl diphosphate from 1-deoxy-D-xylulose 5-phosphate: step 3/6. In terms of biological role, catalyzes the phosphorylation of the position 2 hydroxy group of 4-diphosphocytidyl-2C-methyl-D-erythritol. The sequence is that of 4-diphosphocytidyl-2-C-methyl-D-erythritol kinase from Shigella dysenteriae serotype 1 (strain Sd197).